The chain runs to 268 residues: Interleukin-1 alpha (268 aa).

Positions 1–112 (MAKVPDLFED…DTEEEIIKPR (112 aa)) are excised as a propeptide. At K82 the chain carries N6-acetyllysine. The nuclear localization signal (NLS) stretch occupies residues 82-86 (KKRRL). S87 bears the Phosphoserine mark. 2 N-linked (GlcNAc...) asparagine glycosylation sites follow: N102 and N141.

This sequence belongs to the IL-1 family. In terms of assembly, monomer. Interacts with TMED10; the interaction mediates the translocation from the cytoplasm into the ERGIC (endoplasmic reticulum-Golgi intermediate compartment) and thereby secretion. Interacts with IL1R1. Interacts with S100A13; this interaction is the first step in the export of IL1A, followed by direct translocation of this complex across the plasma membrane. In terms of processing, acetylated within its nuclear localization sequence, which impacts subcellular localization. Proteolytic processed by CAPN1 in a calcium-dependent manner. Cleavage from 31 kDa precursor to 18 kDa biologically active molecules. Post-translationally, phosphorylated. Phosphorylation greatly enhances susceptibility to digestion and promotes the conversion of pre-IL1A alpha to the biologically active IL1A.

The protein resides in the nucleus. Its subcellular location is the cytoplasm. It localises to the secreted. Cytokine constitutively present intracellularly in nearly all resting non-hematopoietic cells that plays an important role in inflammation and bridges the innate and adaptive immune systems. After binding to its receptor IL1R1 together with its accessory protein IL1RAP, forms the high affinity interleukin-1 receptor complex. Signaling involves the recruitment of adapter molecules such as MYD88, IRAK1 or IRAK4. In turn, mediates the activation of NF-kappa-B and the three MAPK pathways p38, p42/p44 and JNK pathways. Within the cell, acts as an alarmin and cell death results in its liberation in the extracellular space after disruption of the cell membrane to induce inflammation and alert the host to injury or damage. In addition to its role as a danger signal, which occurs when the cytokine is passively released by cell necrosis, directly senses DNA damage and acts as signal for genotoxic stress without loss of cell integrity. This chain is Interleukin-1 alpha (IL1A), found in Lama glama (Llama).